The primary structure comprises 86 residues: Anti-adapter protein IraP (86 aa).

Positions 1 to 36 form a coiled coil; sequence MKNLISELLLRLAQKEEESKELVAQVEALEIIVTAM.

This sequence belongs to the IraP family. As to quaternary structure, interacts with RssB.

The protein resides in the cytoplasm. Inhibits RpoS proteolysis by regulating RssB activity, thereby increasing the stability of the sigma stress factor RpoS especially during phosphate starvation, but also in stationary phase and during nitrogen starvation. Its effect on RpoS stability is due to its interaction with RssB, which probably blocks the interaction of RssB with RpoS, and the consequent delivery of the RssB-RpoS complex to the ClpXP protein degradation pathway. The protein is Anti-adapter protein IraP of Citrobacter koseri (strain ATCC BAA-895 / CDC 4225-83 / SGSC4696).